A 714-amino-acid polypeptide reads, in one-letter code: Polyribonucleotide nucleotidyltransferase (714 aa).

D487 and D493 together coordinate Mg(2+). The region spanning 554 to 613 (PRIEVLQIPTDKIRDVIGTGGKVIREIVEKTGAKINIEDDGTVKVASANGESIRAAIKWI) is the KH domain. Residues 623–691 (GQIYDGTVVK…DRGKVRLSMK (69 aa)) enclose the S1 motif domain.

This sequence belongs to the polyribonucleotide nucleotidyltransferase family. It depends on Mg(2+) as a cofactor.

It localises to the cytoplasm. The enzyme catalyses RNA(n+1) + phosphate = RNA(n) + a ribonucleoside 5'-diphosphate. Its function is as follows. Involved in mRNA degradation. Catalyzes the phosphorolysis of single-stranded polyribonucleotides processively in the 3'- to 5'-direction. The chain is Polyribonucleotide nucleotidyltransferase from Afipia carboxidovorans (strain ATCC 49405 / DSM 1227 / KCTC 32145 / OM5) (Oligotropha carboxidovorans).